The sequence spans 166 residues: Putative 4-hydroxy-4-methyl-2-oxoglutarate aldolase 1 (166 aa).

An N-acetylalanine modification is found at alanine 2. Substrate-binding positions include 81–84 (GGNP) and arginine 103. Position 104 (aspartate 104) interacts with a divalent metal cation.

Belongs to the class II aldolase/RraA-like family. Homotrimer. A divalent metal cation is required as a cofactor.

The enzyme catalyses 4-hydroxy-4-methyl-2-oxoglutarate = 2 pyruvate. The catalysed reaction is oxaloacetate + H(+) = pyruvate + CO2. In terms of biological role, catalyzes the aldol cleavage of 4-hydroxy-4-methyl-2-oxoglutarate (HMG) into 2 molecules of pyruvate. Also contains a secondary oxaloacetate (OAA) decarboxylase activity due to the common pyruvate enolate transition state formed following C-C bond cleavage in the retro-aldol and decarboxylation reactions. The protein is Putative 4-hydroxy-4-methyl-2-oxoglutarate aldolase 1 of Arabidopsis thaliana (Mouse-ear cress).